Reading from the N-terminus, the 384-residue chain is Queuine tRNA-ribosyltransferase (384 aa).

The active-site Proton acceptor is the aspartate 93. Substrate-binding positions include 93–97 (DSGGF), aspartate 147, glutamine 202, and glycine 229. The segment at 260 to 266 (GVGYPEE) is RNA binding. Aspartate 279 serves as the catalytic Nucleophile. Residues 284–288 (TRAAR) are RNA binding; important for wobble base 34 recognition. Zn(2+) is bound by residues cysteine 317, cysteine 319, cysteine 322, and histidine 348.

Belongs to the queuine tRNA-ribosyltransferase family. In terms of assembly, homodimer. Within each dimer, one monomer is responsible for RNA recognition and catalysis, while the other monomer binds to the replacement base PreQ1. The cofactor is Zn(2+).

It catalyses the reaction 7-aminomethyl-7-carbaguanine + guanosine(34) in tRNA = 7-aminomethyl-7-carbaguanosine(34) in tRNA + guanine. It participates in tRNA modification; tRNA-queuosine biosynthesis. Catalyzes the base-exchange of a guanine (G) residue with the queuine precursor 7-aminomethyl-7-deazaguanine (PreQ1) at position 34 (anticodon wobble position) in tRNAs with GU(N) anticodons (tRNA-Asp, -Asn, -His and -Tyr). Catalysis occurs through a double-displacement mechanism. The nucleophile active site attacks the C1' of nucleotide 34 to detach the guanine base from the RNA, forming a covalent enzyme-RNA intermediate. The proton acceptor active site deprotonates the incoming PreQ1, allowing a nucleophilic attack on the C1' of the ribose to form the product. After dissociation, two additional enzymatic reactions on the tRNA convert PreQ1 to queuine (Q), resulting in the hypermodified nucleoside queuosine (7-(((4,5-cis-dihydroxy-2-cyclopenten-1-yl)amino)methyl)-7-deazaguanosine). This is Queuine tRNA-ribosyltransferase from Koribacter versatilis (strain Ellin345).